Consider the following 369-residue polypeptide: Putative FAD-dependent monooxygenase YetM (369 aa).

The N-terminal stretch at 1–32 (MKHMLIAGGGIGGLSAAISLRKAGFSVTLCEA) is a signal peptide. Residues G12, 31–32 (EA), V126, and D285 each bind FAD.

FAD is required as a cofactor.

This is Putative FAD-dependent monooxygenase YetM (yetM) from Bacillus subtilis (strain 168).